Here is a 245-residue protein sequence, read N- to C-terminus: Protein OXIDATIVE STRESS 3 LIKE 6 (245 aa).

The interval 46–90 (QIGIGLRMSNNNNKSPEESSDSSSSIGESSENEEEEEEDDAVSCQ) is disordered. The span at 75 to 86 (SENEEEEEEDDA) shows a compositional bias: acidic residues. Positions 143–151 (NKRRRLVIA) match the Nuclear localization signal motif. The kinase-inducible domain (KID) stretch occupies residues 203-230 (DDHRKIMMMMKNKKELMAQTRSCFCLSS).

It is found in the nucleus. Functionally, probable transcription factor. Promotes slightly the tolerance to cadmium (Cd) and to oxidizing chemicals (e.g. diamide). The chain is Protein OXIDATIVE STRESS 3 LIKE 6 from Arabidopsis thaliana (Mouse-ear cress).